The primary structure comprises 120 residues: Ribosome-binding factor A (120 aa).

This sequence belongs to the RbfA family. Monomer. Binds 30S ribosomal subunits, but not 50S ribosomal subunits or 70S ribosomes.

It localises to the cytoplasm. Its function is as follows. One of several proteins that assist in the late maturation steps of the functional core of the 30S ribosomal subunit. Associates with free 30S ribosomal subunits (but not with 30S subunits that are part of 70S ribosomes or polysomes). Required for efficient processing of 16S rRNA. May interact with the 5'-terminal helix region of 16S rRNA. The polypeptide is Ribosome-binding factor A (Clostridium botulinum (strain ATCC 19397 / Type A)).